A 155-amino-acid polypeptide reads, in one-letter code: 6,7-dimethyl-8-ribityllumazine synthase (155 aa).

5-amino-6-(D-ribitylamino)uracil-binding positions include Trp23, 57–59, and 81–83; these read AWE and CVI. 86–87 contributes to the (2S)-2-hydroxy-3-oxobutyl phosphate binding site; sequence DT. Residue His89 is the Proton donor of the active site. Position 114 (Asn114) interacts with 5-amino-6-(D-ribitylamino)uracil. A (2S)-2-hydroxy-3-oxobutyl phosphate-binding site is contributed by Arg128.

This sequence belongs to the DMRL synthase family. Forms an icosahedral capsid composed of 60 subunits, arranged as a dodecamer of pentamers.

The enzyme catalyses (2S)-2-hydroxy-3-oxobutyl phosphate + 5-amino-6-(D-ribitylamino)uracil = 6,7-dimethyl-8-(1-D-ribityl)lumazine + phosphate + 2 H2O + H(+). It participates in cofactor biosynthesis; riboflavin biosynthesis; riboflavin from 2-hydroxy-3-oxobutyl phosphate and 5-amino-6-(D-ribitylamino)uracil: step 1/2. Catalyzes the formation of 6,7-dimethyl-8-ribityllumazine by condensation of 5-amino-6-(D-ribitylamino)uracil with 3,4-dihydroxy-2-butanone 4-phosphate. This is the penultimate step in the biosynthesis of riboflavin. The chain is 6,7-dimethyl-8-ribityllumazine synthase from Stenotrophomonas maltophilia (strain R551-3).